Here is a 481-residue protein sequence, read N- to C-terminus: UDP-glucose 6-dehydrogenase 1 (481 aa).

NAD(+) is bound by residues 8-13, aspartate 33, arginine 38, 86-90, 127-128, and glutamate 161; these read GAGYVG, VNTPT, and ST. Residues 157–161, 216–223, and 256–269 each bind substrate; these read EFLAE, KLAANAFL, and RIGPKFLNASVGFG. Residue cysteine 272 is the Nucleophile of the active site. 272–275 serves as a coordination point for NAD(+); the sequence is CFQK. Residue 334–335 coordinates substrate; it reads FK. Arginine 342 contacts NAD(+). Residue arginine 448 participates in substrate binding.

The protein belongs to the UDP-glucose/GDP-mannose dehydrogenase family.

The catalysed reaction is UDP-alpha-D-glucose + 2 NAD(+) + H2O = UDP-alpha-D-glucuronate + 2 NADH + 3 H(+). It functions in the pathway nucleotide-sugar biosynthesis; UDP-alpha-D-glucuronate biosynthesis; UDP-alpha-D-glucuronate from UDP-alpha-D-glucose: step 1/1. Its activity is regulated as follows. Inhibited by UDP-xylose. Functionally, involved in the biosynthesis of UDP-glucuronic acid (UDP-GlcA), providing nucleotide sugars for cell-wall polymers. The sequence is that of UDP-glucose 6-dehydrogenase 1 (UGD1) from Arabidopsis thaliana (Mouse-ear cress).